Here is a 129-residue protein sequence, read N- to C-terminus: Aspartate 1-decarboxylase (129 aa).

Ser25 serves as the catalytic Schiff-base intermediate with substrate; via pyruvic acid. Ser25 bears the Pyruvic acid (Ser) mark. A substrate-binding site is contributed by Thr57. The active-site Proton donor is Tyr58. 73 to 75 (GAA) contacts substrate.

It belongs to the PanD family. In terms of assembly, heterooctamer of four alpha and four beta subunits. The cofactor is pyruvate. Post-translationally, is synthesized initially as an inactive proenzyme, which is activated by self-cleavage at a specific serine bond to produce a beta-subunit with a hydroxyl group at its C-terminus and an alpha-subunit with a pyruvoyl group at its N-terminus.

It localises to the cytoplasm. It catalyses the reaction L-aspartate + H(+) = beta-alanine + CO2. The protein operates within cofactor biosynthesis; (R)-pantothenate biosynthesis; beta-alanine from L-aspartate: step 1/1. In terms of biological role, catalyzes the pyruvoyl-dependent decarboxylation of aspartate to produce beta-alanine. This Hydrogenovibrio crunogenus (strain DSM 25203 / XCL-2) (Thiomicrospira crunogena) protein is Aspartate 1-decarboxylase.